Here is a 1517-residue protein sequence, read N- to C-terminus: uncharacterized protein (1517 aa).

A compositionally biased stretch (polar residues) spans 1–13; it reads MNQFPNQPGNFGQ. Positions 1–26 are disordered; it reads MNQFPNQPGNFGQNYYKPVQGSIPAN. 3 N-linked (GlcNAc...) asparagine glycosylation sites follow: Asn35, Asn40, and Asn76. The next 5 membrane-spanning stretches (helical) occupy residues 231–251, 397–417, 510–530, 612–632, and 720–740; these read AIDFVVSLFGCFIAGVVAVPI, AIGLILGVLHTVFSGYTTVWC, FVPLLCLPEHGGMVISMKDWI, PNIVGEIWVDSPSLSGGFFAL, and VFDCSAFDIFVNSEHLPVVLL. Asn917 carries N-linked (GlcNAc...) asparagine glycosylation. 4 consecutive transmembrane segments (helical) span residues 956-976, 985-1005, 1051-1071, and 1114-1134; these read FVYALYACFYLGLIPIPVPPL, VPAFLFLIKHYYVSAVLVNSE, VKLDPICLDPAFPALVWAFWS, and GIGFFHTCLMGVFLGTTTYLL. Asn1178 carries N-linked (GlcNAc...) asparagine glycosylation. Residues 1261–1281 form a helical membrane-spanning segment; it reads PYALPLLDSGMVPVSTQLAIV. Asn1321 carries an N-linked (GlcNAc...) asparagine glycan. Transmembrane regions (helical) follow at residues 1353-1373 and 1408-1428; these read APVVDMQLLYVLGPIGETFEV and VVVVIEALGQDFLAAIVPVVI.

It to S.pombe SpAC22F3.04.

The protein resides in the membrane. This is an uncharacterized protein from Schizosaccharomyces pombe (strain 972 / ATCC 24843) (Fission yeast).